A 335-amino-acid polypeptide reads, in one-letter code: Casein kinase I (335 aa).

The Protein kinase domain maps to 9–278 (YRLGRKIGSG…LRRLFKDLFF (270 aa)). Residues 15–23 (IGSGSFGDI) and Lys-38 each bind ATP. Asp-128 acts as the Proton acceptor in catalysis. The disordered stretch occupies residues 304-335 (RSMVNQGAESGNQWRRDASGRDPLGRLPQLEP). The segment covering 305-316 (SMVNQGAESGNQ) has biased composition (polar residues). Positions 317 to 327 (WRRDASGRDPL) are enriched in basic and acidic residues.

This sequence belongs to the protein kinase superfamily. CK1 Ser/Thr protein kinase family. Casein kinase I subfamily.

The enzyme catalyses L-seryl-[protein] + ATP = O-phospho-L-seryl-[protein] + ADP + H(+). It catalyses the reaction L-threonyl-[protein] + ATP = O-phospho-L-threonyl-[protein] + ADP + H(+). Functionally, casein kinases are operationally defined by their preferential utilization of acidic proteins such as caseins as substrates. It can phosphorylate a large number of proteins. This Eimeria tenella (Coccidian parasite) protein is Casein kinase I.